A 2474-amino-acid chain; its full sequence is Polyprotein P1234 (2474 aa).

In terms of domain architecture, Alphavirus-like MT spans 28-259 (EPRQVTPNDH…ESRKLLKSWH (232 aa)). Residue His37 is the For mRNA-capping enzyme nsP1 activity of the active site. Residues His79, Glu129, Cys134, and Cys141 each contribute to the Zn(2+) site. The interval 295 to 450 (GLYGKTTGYA…QKVPAEFDSF (156 aa)) is membrane-binding and oligomerization. 2 S-palmitoyl cysteine; by host lipidation sites follow: Cys417 and Cys419. Positions 690-842 (DLTNPPYHEF…HNICTQVYHK (153 aa)) constitute a (+)RNA virus helicase ATP-binding domain. Position 721–728 (721–728 (GVPGSGKS)) interacts with a ribonucleoside 5'-triphosphate. One can recognise a (+)RNA virus helicase C-terminal domain in the interval 843 to 991 (SISRRCTLPV…IKEWEVEHAS (149 aa)). The 324-residue stretch at 1004-1327 (DTFQNKANVC…NQLNAAFVGQ (324 aa)) folds into the Peptidase C9 domain. The tract at residues 1005-1024 (TFQNKANVCWAKSLVPILET) is nucleolus localization signal. Cys1013 functions as the For cysteine protease nsP2 activity in the catalytic mechanism. The Nuclear export signal signature appears at 1058–1067 (TRMYGVDLDS). The For cysteine protease nsP2 activity role is filled by His1083. The Nuclear localization signal motif lies at 1182–1186 (PTKRV). In terms of domain architecture, Macro spans 1334-1493 (APSYRVKRMD…KIAEAIQMRT (160 aa)). Residues Asp1343, Asn1357, Gly1365, Gly1445, Val1446, and Tyr1447 each coordinate ADP-D-ribose. 4 residues coordinate Zn(2+): Cys1595, Cys1597, Cys1620, and Cys1638. The disordered stretch occupies residues 1651–1706 (RVSPREYKSPQETAQEVSSTTSLTHSQFDLSVDGEELPAPSDLEADAPIPEPTPDD). The tract at residues 1659-1857 (SPQETAQEVS…TCSDTDDELX (199 aa)) is HVD. Over residues 1660 to 1679 (PQETAQEVSSTTSLTHSQFD) the composition is skewed to polar residues. Interaction with host CD2AP stretches follow at residues 1726 to 1739 (VMNT…RRRR) and 1756 to 1767 (PMASVRFFRADL). Residues 1745 to 1793 (VTCDEREGNVLPMASVRFFRADLHSIVQETAEIRDTAASLQAPLSVATE) are interaction with host FHL1. Positions 1812 to 1815 (FGDF) match the FGDF; binding to host G3BP1 motif. The segment at 1820-1828 (IESLSSELL) is interaction with host CD2AP. The FGDF; binding to host G3BP1 signature appears at 1830–1833 (FGDF). In terms of domain architecture, RdRp catalytic spans 2228–2343 (DAVLETDIAS…HGVVSDELMA (116 aa)).

In terms of assembly, homododecamer. The enzyme forms a membrane-associated dodecameric ring with a central channel for the exchange of between the viral replication factories and the host cytoplasm. Interacts with non-structural protein 3. Interacts with RNA-directed RNA polymerase nsP4. Interacts with protease nsP2. Interacts with itself. Interacts with host STING1; this interaction results in inhibition of cGAS-STING signaling and increased levels of palmitoylation and protein stabilization of nsP1. Interacts with host TMEM45B; this interaction leads to viral replication inhibition. As to quaternary structure, interacts with mRNA-capping enzyme nsP1. Interacts (via C-terminus) with host G3BP1; this interaction inhibits the formation of host stress granules on viral mRNAs and the nsp3-G3BP1 complexes bind viral RNAs and probably orchestrate the assembly of viral replication complexes. Interacts (via C-terminus) with host G3BP2; this interaction inhibits the formation of host stress granules on viral mRNAs and the nsp3-G3BP2 complexes bind viral RNAs and probably orchestrate the assembly of viral replication complexes. Interacts (via C-terminus) with host NAP1L1. Interacts (via C-terminus) with host NAP1L4. Interacts (via C-terminus) with host DHX9; this interaction allows the recruitment of DHX9 to the plasma membrane, where it associates with viral replication complexes and may play a role in the translation-to-replication switch. Interacts (via C-terminus) with host FHL1 (via LIM domain 1); this interaction is required for viral RNA replication. Interacts (via C-terminus) with host CD2AP; this interaction plays a role in initiation of viral replication. Interacts (via C-terminus) with host SH3KBP1; this interaction plays a role in initiation of viral replication. Interacts with mRNA-capping enzyme nsP1. Interacts with protease nsP2. interacts with itself. Interacts with host TMEM45B; this interaction leads to viral replication inhibition. In terms of assembly, interacts with RNA-directed RNA polymerase nsP4. Interacts with mRNA-capping enzyme nsP1. Interacts with KPNA1/karyopherin-alpha1; this interaction probably allows the active transport of protease nsP2 into the host nucleus. Requires Mg(2+) as cofactor. It depends on Mn(2+) as a cofactor. In terms of processing, specific enzymatic cleavages in vivo yield mature proteins. The processing of the polyprotein is temporally regulated. In early stages (1.7 hpi), P1234 is first cleaved in trans through its nsP2 protease activity, releasing P123' and nsP4, which associate to form the early replication complex. At the same time, P1234 is also cut at the nsP1/nsP2 site early in infection but with lower efficiency. After replication of the viral minus-strand RNAs (4 hpi), the polyproteins are cut at the nsP1/nsP2 and nsP2/nsP3 sites very efficiently, preventing accumulation of P123' and P1234 and allowing the formation of the late replication complex. NsP3'/nsP4 site is not cleaved anymore and P34 is produced rather than nsP4. Post-translationally, specific enzymatic cleavages in vivo yield mature proteins. The processing of the polyprotein is temporally regulated. In early stages (1.7 hpi), P123 is cleaved at the nsP1/nsP2 site with low efficiency. After replication of the viral minus-strand RNAs (4 hpi), the polyproteins are cut at the nsP1/nsP2 and nsP2/nsP3 sites very efficiently, preventing accumulation of P123 and allowing the formation of the late replication complex. Specific enzymatic cleavages in vivo yield mature proteins. The processing of the polyprotein is temporally regulated. In early stages (1.7 hpi), P123' is cleaved at the nsP1/nsP2 site with low efficiency. After replication of the viral minus-strand RNAs (4 hpi), the polyproteins are cut at the nsP1/nsP2 and nsP2/nsP3 sites very efficiently, preventing accumulation of P123' and allowing the formation of the late replication complex. In terms of processing, palmitoylated by host palmitoyltransferases ZDHHC2 and ZDHHC19. Palmitoylation is increased by the interacton with host STING1. Post-translationally, phosphorylated by host on serines and threonines. Ubiquitinated; targets the protein for rapid degradation via the ubiquitin system. Nsp4 is present in extremely low quantities due to low frequency of translation through the amber stop-codon and the degradation by the ubiquitin pathway.

The protein localises to the host cytoplasmic vesicle membrane. The protein resides in the host cell membrane. Its subcellular location is the host cell projection. It localises to the host filopodium. It is found in the host nucleus. The protein localises to the host cytoplasm. It carries out the reaction GTP + S-adenosyl-L-methionine = N(7)-methyl-GTP + S-adenosyl-L-homocysteine. It catalyses the reaction N(7)-methyl-GTP + L-histidyl-[protein] = N(tele)-(N(7)-methylguanosine 5'-phospho)-L-histidyl-[protein] + diphosphate. The catalysed reaction is N(tele)-(N(7)-methylguanosine 5'-phospho)-L-histidyl-[protein] + a 5'-end diphospho-(purine-ribonucleoside) in mRNA + H(+) = a 5'-end (N(7)-methyl 5'-triphosphoguanosine)-(purine-ribonucleoside) in mRNA + L-histidyl-[protein]. The enzyme catalyses a 5'-end triphospho-ribonucleoside in mRNA + H2O = a 5'-end diphospho-ribonucleoside in mRNA + phosphate + H(+). It carries out the reaction a ribonucleoside 5'-triphosphate + H2O = a ribonucleoside 5'-diphosphate + phosphate + H(+). It catalyses the reaction ATP + H2O = ADP + phosphate + H(+). The catalysed reaction is RNA(n) + a ribonucleoside 5'-triphosphate = RNA(n+1) + diphosphate. The enzyme catalyses 4-O-(ADP-D-ribosyl)-L-aspartyl-[protein] + H2O = L-aspartyl-[protein] + ADP-D-ribose + H(+). It carries out the reaction 5-O-(ADP-D-ribosyl)-L-glutamyl-[protein] + H2O = L-glutamyl-[protein] + ADP-D-ribose + H(+). It catalyses the reaction RNA(n) + ATP = RNA(n)-3'-adenine ribonucleotide + diphosphate. The catalysed reaction is ADP-alpha-D-ribose 1''-phosphate + H2O = ADP-D-ribose + phosphate. Functionally, inactive precursor of the viral replicase, which is activated by cleavages carried out by the viral protease nsP2. In terms of biological role, the early replication complex formed by the polyprotein P123 and nsP4 synthesizes minus-strand RNAs. As soon P123 is cleaved into mature proteins, the plus-strand RNAs synthesis begins. Its function is as follows. The early replication complex formed by the polyprotein P123' and nsP4 synthesizes minus-strand RNAs. Polyprotein P123' is a short-lived polyprotein that accumulates during early stage of infection. As soon P123' is cleaved into mature proteins, the plus-strand RNAs synthesis begins. Cytoplasmic capping enzyme that catalyzes two virus-specific reactions: methyltransferase and guanylyltransferase. mRNA-capping is necessary since all viral RNAs are synthesized in the cytoplasm, and host capping enzymes are restricted to the nucleus. The enzymatic reaction involves a covalent link between 7-methyl-GMP and nsP1, whereas eukaryotic capping enzymes form a covalent complex only with GMP. nsP1 capping consists in the following reactions: GTP is first methylated into 7-methyl-GMP and then is covalently linked to nsP1 to form the m7GMp-nsP1 complex from which 7-methyl-GMP complex is transferred to the mRNA to create the cap structure. NsP1 is also needed for the initiation of the minus-strand RNAs synthesis. At the initiation of virus replication, mediates the assembly of the viral replication complex made of the non-structural proteins, the association of this complex with the inner face of the plasma membrane and the formation of membranous spherules that serve as replication complex factories. Forms the neck of these spherules with a central channel for mediating communication and the passage of RNA, nucleotides, and small proteins between the viral replication complex and the host cytoplasm. Palmitoylated nsP1 is remodeling host cell cytoskeleton, and induces filopodium-like structure formation at the surface of the host cell. Functionally, multifunctional protein whose N-terminus is part of the RNA polymerase complex and displays NTPase, RNA triphosphatase and helicase activities. NTPase and RNA triphosphatase are involved in viral RNA capping and helicase keeps a check on the dsRNA replication intermediates. The C-terminus harbors a protease that specifically cleaves the polyproteins and releases the mature proteins. Required for the shutoff of minus-strand RNAs synthesis. Specifically inhibits the host IFN response by promoting the nuclear export of host STAT1. Also inhibits host transcription by inducing the rapid proteasome-dependent degradation of POLR2A, a catalytic subunit of the RNAPII complex. The resulting inhibition of cellular protein synthesis serves to ensure maximal viral gene expression and to evade host immune response. In terms of biological role, seems to be essential for minus-strand RNAs and subgenomic 26S mRNAs synthesis. Displays mono-ADP-ribosylhydrolase activity. ADP-ribosylation is a post-translational modification that controls various processes of the host cell and the virus probably needs to revert it for optimal viral replication. Binds proteins of FXR family and sequesters them into the viral RNA replication complexes thereby inhibiting the formation of host stress granules on viral mRNAs. The nsp3'-FXR complexes bind viral RNAs and probably orchestrate the assembly of viral replication complexes, thanks to the ability of FXR family members to self-assemble and bind DNA. Its function is as follows. Seems to be essential for minus-strand RNAs and subgenomic 26S mRNAs synthesis. Displays mono-ADP-ribosylhydrolase activity. ADP-ribosylation is a post-translational modification that controls various processes of the host cell and the virus probably needs to revert it for optimal viral replication. Binds proteins of G3BP family and sequesters them into the viral RNA replication complexes thereby inhibiting the formation of host stress granules on viral mRNAs. The nsp3-G3BP complexes bind viral RNAs and probably orchestrate the assembly of viral replication complexes, thanks to the ability of G3BP family members to self-assemble and bind DNA. RNA dependent RNA polymerase. Replicates genomic and antigenomic RNA by recognizing replications specific signals. The early replication complex formed by the polyprotein P123 and nsP4 synthesizes minus-strand RNAs. The late replication complex composed of fully processed nsP1-nsP4 is responsible for the production of genomic and subgenomic plus-strand RNAs. This Aedes aegypti (Yellowfever mosquito) protein is Polyprotein P1234.